The following is a 71-amino-acid chain: Non-disulfide-bridged peptide 5.5 (71 aa).

The signal sequence occupies residues 1–23; it reads MKTQFIVLIVAIVFLQLLSQSEA. Leu-36 is subject to Leucine amide. Residues 40–71 constitute a propeptide that is removed on maturation; it reads DLRHLDLDQFDDMFDQPEISAADMKFLQDLLR.

Belongs to the non-disulfide-bridged peptide (NDBP) superfamily. Short antimicrobial peptide (group 4) family. Expressed by the venom gland.

The protein resides in the secreted. The protein localises to the target cell membrane. In terms of biological role, antimicrobial peptide. Is active on Mycobacterium abscessus subsp. massiliense (MBC=200 uM), a rapidly growing and emerging pathogen associated with healthcare infections. Also shows antifungal activities. Has a weak hemolytic activity on human erythrocytes (10% at 610 uM), indicating a low toxicity (therapeutic index (TI)=3.05). In addition, treatment of infected macrophages reduces the bacterial load. In vivo, treatment of M.abscessus-infected mice causes a decrease in the bacterial load in the lungs and liver. This Hoffmannihadrurus gertschi (Scorpion) protein is Non-disulfide-bridged peptide 5.5.